Here is a 97-residue protein sequence, read N- to C-terminus: Ig heavy chain V region 914 (97 aa).

The 97-residue stretch at 1-97 (EVKLVESGGG…EDTAMYYCAR (97 aa)) folds into the Ig-like domain.

The protein is Ig heavy chain V region 914 of Mus musculus (Mouse).